The sequence spans 699 residues: Proline-rich receptor-like protein kinase PERK7 (699 aa).

The disordered stretch occupies residues 1–167 (MAEGQSPENS…TSNSGSNSSS (167 aa)). Topologically, residues 1-172 (MAEGQSPENS…SNSSSNDGLN (172 aa)) are extracellular. Pro residues-rich tracts occupy residues 9–23 (NSPP…PSPP) and 43–68 (SPPP…PPLP). The N-linked (GlcNAc...) asparagine glycan is linked to N70. Residues 100 to 121 (PPQQSDNNGNKGNNNENNKGND) are compositionally biased toward low complexity. N131 is a glycosylation site (N-linked (GlcNAc...) asparagine). Residues 148 to 158 (HSQPRSLAPPT) show a composition bias toward polar residues. N164 is a glycosylation site (N-linked (GlcNAc...) asparagine). A helical membrane pass occupies residues 173 to 193 (IGAVIGLVAAAGILFIVMILL). Topologically, residues 194–699 (CVCCFRKKKK…SKTTTTNRGI (506 aa)) are cytoplasmic. Phosphothreonine is present on T325. The Protein kinase domain maps to 336–615 (FSKDRLLGQG…VRTLEGDASL (280 aa)). Residues 342–350 (LGQGGFGYV) and K364 each bind ATP. At Y410 the chain carries Phosphotyrosine. The active-site Proton acceptor is the D461. Phosphoserine occurs at positions 465 and 494. T495 and T500 each carry phosphothreonine. Residue Y508 is modified to Phosphotyrosine. 2 disordered regions span residues 609-639 (LEGD…DYEM) and 658-699 (DYGA…NRGI). The segment covering 687-699 (GSTSKTTTTNRGI) has biased composition (polar residues).

Belongs to the protein kinase superfamily. Ser/Thr protein kinase family. Mostly expressed in flower buds.

Its subcellular location is the cell membrane. It carries out the reaction L-seryl-[protein] + ATP = O-phospho-L-seryl-[protein] + ADP + H(+). The enzyme catalyses L-threonyl-[protein] + ATP = O-phospho-L-threonyl-[protein] + ADP + H(+). This is Proline-rich receptor-like protein kinase PERK7 (PERK7) from Arabidopsis thaliana (Mouse-ear cress).